The primary structure comprises 125 residues: Large ribosomal subunit protein uL24 (125 aa).

Belongs to the universal ribosomal protein uL24 family. Part of the 50S ribosomal subunit.

Functionally, one of two assembly initiator proteins, it binds directly to the 5'-end of the 23S rRNA, where it nucleates assembly of the 50S subunit. Its function is as follows. One of the proteins that surrounds the polypeptide exit tunnel on the outside of the subunit. In Mycoplasma mobile (strain ATCC 43663 / 163K / NCTC 11711) (Mesomycoplasma mobile), this protein is Large ribosomal subunit protein uL24.